The sequence spans 203 residues: Small ribosomal subunit protein uS4 (203 aa).

One can recognise an S4 RNA-binding domain in the interval 93–153 (QRLDSVVYRL…EKSKNILPIQ (61 aa)).

It belongs to the universal ribosomal protein uS4 family. Part of the 30S ribosomal subunit. Contacts protein S5. The interaction surface between S4 and S5 is involved in control of translational fidelity.

Its function is as follows. One of the primary rRNA binding proteins, it binds directly to 16S rRNA where it nucleates assembly of the body of the 30S subunit. Functionally, with S5 and S12 plays an important role in translational accuracy. The chain is Small ribosomal subunit protein uS4 from Leuconostoc mesenteroides subsp. mesenteroides (strain ATCC 8293 / DSM 20343 / BCRC 11652 / CCM 1803 / JCM 6124 / NCDO 523 / NBRC 100496 / NCIMB 8023 / NCTC 12954 / NRRL B-1118 / 37Y).